The primary structure comprises 447 residues: N-succinylarginine dihydrolase (447 aa).

Residues 19 to 28 (AGLSFGNEAS), Asn110, and 137 to 138 (HR) contribute to the substrate site. Glu174 is an active-site residue. Arg212 contacts substrate. His248 is an active-site residue. Substrate is bound by residues Asp250 and Asn359. Cys365 acts as the Nucleophile in catalysis.

Belongs to the succinylarginine dihydrolase family. Homodimer.

The enzyme catalyses N(2)-succinyl-L-arginine + 2 H2O + 2 H(+) = N(2)-succinyl-L-ornithine + 2 NH4(+) + CO2. It functions in the pathway amino-acid degradation; L-arginine degradation via AST pathway; L-glutamate and succinate from L-arginine: step 2/5. Its function is as follows. Catalyzes the hydrolysis of N(2)-succinylarginine into N(2)-succinylornithine, ammonia and CO(2). This Citrobacter koseri (strain ATCC BAA-895 / CDC 4225-83 / SGSC4696) protein is N-succinylarginine dihydrolase.